Consider the following 237-residue polypeptide: MKLLIFSCLVTLALARPDALRLSIDRHFKHRELENRLNEDPIPVSEASSSEESVHQLNRDRRPLEKYELDKYREDLKTSSSEEFVTPSTNERVRRQVEYNFNEEDSSASRERKIEDFSEHDRQYLRRRVEERALNLRYLEPLYYATEPEYYYYYAYVPVSSHDIPYQQKPLSLLPAKSHYLISTGLLNEPLPILRERLGRGFQSPSLLILVLTENSNLFMGSVFYWCLQIAHPMQEI.

A signal peptide spans 1 to 15 (MKLLIFSCLVTLALA). Residues 39-60 (EDPIPVSEASSSEESVHQLNRD) are disordered. A phosphoserine mark is found at Ser-79, Ser-80, and Ser-81.

It belongs to the alpha-casein family. As to expression, mammary gland specific. Secreted in milk.

It localises to the secreted. Important role in the capacity of milk to transport calcium phosphate. This is Alpha-S1-casein (CSN1S1) from Notamacropus eugenii (Tammar wallaby).